Consider the following 45-residue polypeptide: Thymosin beta-15A homolog (45 aa).

Positions Lys-19–Ser-45 are disordered. Basic and acidic residues predominate over residues Thr-21–Ser-45.

Belongs to the thymosin beta family.

The protein resides in the cytoplasm. The protein localises to the cytoskeleton. In terms of biological role, plays an important role in the organization of the cytoskeleton. Binds to and sequesters actin monomers (G actin) and therefore inhibits actin polymerization. The sequence is that of Thymosin beta-15A homolog from Coturnix japonica (Japanese quail).